Consider the following 240-residue polypeptide: Sugar fermentation stimulation protein homolog (240 aa).

This sequence belongs to the SfsA family.

In Saccharolobus islandicus (strain M.16.4 / Kamchatka #3) (Sulfolobus islandicus), this protein is Sugar fermentation stimulation protein homolog.